The primary structure comprises 241 residues: MSDNEKETQVAEETQNTQAAAESNNEDRKSRRGQRGEGRRGERRNRREESHENEMLDRVVTINRVSKTHKGGRTFSFAALVVVGDGKGTVGVGYGKSREVPAAIAKGQLDAKKHMFTVPRIKGTVTHPVIGHDAAGTVLLRPAAPGTGVIAGGAVRAVMECAGITDVLTKSMGSATAVNVVRATVDALKKLEEPEEIAARRGMSLEEVAPDALLRARAEGIAEARKAREEAQAKAAQKDGE.

Residues 1 to 53 (MSDNEKETQVAEETQNTQAAAESNNEDRKSRRGQRGEGRRGERRNRREESHEN) form a disordered region. The segment covering 11–22 (AEETQNTQAAAE) has biased composition (low complexity). The span at 25-53 (NEDRKSRRGQRGEGRRGERRNRREESHEN) shows a compositional bias: basic and acidic residues. The S5 DRBM domain maps to 55-118 (MLDRVVTINR…LDAKKHMFTV (64 aa)).

Belongs to the universal ribosomal protein uS5 family. In terms of assembly, part of the 30S ribosomal subunit. Contacts proteins S4 and S8.

With S4 and S12 plays an important role in translational accuracy. Functionally, located at the back of the 30S subunit body where it stabilizes the conformation of the head with respect to the body. This Bifidobacterium adolescentis (strain ATCC 15703 / DSM 20083 / NCTC 11814 / E194a) protein is Small ribosomal subunit protein uS5.